Consider the following 486-residue polypeptide: Membrane-bound lytic murein transglycosylase F (486 aa).

The first 21 residues, 1–21, serve as a signal peptide directing secretion; that stretch reads MTRIKLSYFTIGLVALLLALA. The interval 22–268 is non-LT domain; it reads LWPNIPWRNG…RLEEKYLGHV (247 aa). The LT domain stretch occupies residues 269-486; sequence GSFDYVDTKT…VVGPGWSIGD (218 aa). Glu313 is a catalytic residue.

It in the N-terminal section; belongs to the bacterial solute-binding protein 3 family. In the C-terminal section; belongs to the transglycosylase Slt family.

The protein resides in the cell outer membrane. It carries out the reaction Exolytic cleavage of the (1-&gt;4)-beta-glycosidic linkage between N-acetylmuramic acid (MurNAc) and N-acetylglucosamine (GlcNAc) residues in peptidoglycan, from either the reducing or the non-reducing ends of the peptidoglycan chains, with concomitant formation of a 1,6-anhydrobond in the MurNAc residue.. Murein-degrading enzyme that degrades murein glycan strands and insoluble, high-molecular weight murein sacculi, with the concomitant formation of a 1,6-anhydromuramoyl product. Lytic transglycosylases (LTs) play an integral role in the metabolism of the peptidoglycan (PG) sacculus. Their lytic action creates space within the PG sacculus to allow for its expansion as well as for the insertion of various structures such as secretion systems and flagella. The protein is Membrane-bound lytic murein transglycosylase F of Yersinia pestis bv. Antiqua (strain Antiqua).